We begin with the raw amino-acid sequence, 632 residues long: tRNA uridine 5-carboxymethylaminomethyl modification enzyme MnmG (632 aa).

FAD is bound at residue 15-20; sequence GAGHAG. The interval 205 to 231 is disordered; the sequence is PRVDGNTIDYSKTQEEPGDKEPRHFSY. Positions 216-228 are enriched in basic and acidic residues; the sequence is KTQEEPGDKEPRH. 276–290 lines the NAD(+) pocket; that stretch reads GPRYCPSIEDKVVRF.

It belongs to the MnmG family. Homodimer. Heterotetramer of two MnmE and two MnmG subunits. FAD serves as cofactor.

It localises to the cytoplasm. Its function is as follows. NAD-binding protein involved in the addition of a carboxymethylaminomethyl (cmnm) group at the wobble position (U34) of certain tRNAs, forming tRNA-cmnm(5)s(2)U34. This is tRNA uridine 5-carboxymethylaminomethyl modification enzyme MnmG from Lactobacillus johnsonii (strain CNCM I-12250 / La1 / NCC 533).